Reading from the N-terminus, the 385-residue chain is ATP phosphoribosyltransferase regulatory subunit (385 aa).

This sequence belongs to the class-II aminoacyl-tRNA synthetase family. HisZ subfamily. Heteromultimer composed of HisG and HisZ subunits.

The protein localises to the cytoplasm. It functions in the pathway amino-acid biosynthesis; L-histidine biosynthesis; L-histidine from 5-phospho-alpha-D-ribose 1-diphosphate: step 1/9. Required for the first step of histidine biosynthesis. May allow the feedback regulation of ATP phosphoribosyltransferase activity by histidine. The sequence is that of ATP phosphoribosyltransferase regulatory subunit from Laribacter hongkongensis (strain HLHK9).